A 362-amino-acid polypeptide reads, in one-letter code: MANDERVATGEDRAWGRLGVAELRIDAASVAPNDPTEDREVVLPIPGPAVSPIPRLTQPPRSSPPRPDAPSDLPRAQREPTKRSPATAGPTEDPNFADKIFKQAAPARKKPRFMPPPKLICGGVTDVTAELPAPSWDRVAEEFGIPDSWKNILAPLVETQRFAKTLQSYNGAKKSGNVLPSQDQIFAWARYCAPHEVKVIIVGQDPYPTEGDAHGLAFSVPVGRRVPPSLRRVFAALKDCYGDGFPTPSSGSLIAWAKQGVLLLNRHLTVERGLPRSHVSMGWDKLTFGVIKTLANDNPRMAVMLWGYDAKTFVPKLPSKHLRLEYSHPSTSTRRPFDCRHFIEANKFLEEGGLQAVVWRLP.

The segment at 28 to 97 (ASVAPNDPTE…AGPTEDPNFA (70 aa)) is disordered. Residue aspartate 205 is the Proton acceptor of the active site.

Belongs to the uracil-DNA glycosylase (UDG) superfamily. UNG family.

It is found in the host nucleus. It catalyses the reaction Hydrolyzes single-stranded DNA or mismatched double-stranded DNA and polynucleotides, releasing free uracil.. In terms of biological role, excises uracil residues from the DNA which can arise as a result of misincorporation of dUMP residues by DNA polymerase or deamination of cytosines. Therefore may reduce deleterious uracil incorporation into the viral genome, particularly in terminally differentiated cells which lack DNA repair enzymes. The chain is Uracil-DNA glycosylase (UL2) from Psittacid herpesvirus 1 (isolate Amazon parrot/-/97-0001/1997) (PsHV-1).